A 615-amino-acid polypeptide reads, in one-letter code: 1-deoxy-D-xylulose-5-phosphate synthase (615 aa).

Thiamine diphosphate-binding positions include H72 and G111–S113. D142 provides a ligand contact to Mg(2+). Thiamine diphosphate contacts are provided by residues G143 to A144, N171, Y278, and E360. N171 is a Mg(2+) binding site.

It belongs to the transketolase family. DXPS subfamily. In terms of assembly, homodimer. The cofactor is Mg(2+). Thiamine diphosphate is required as a cofactor.

It catalyses the reaction D-glyceraldehyde 3-phosphate + pyruvate + H(+) = 1-deoxy-D-xylulose 5-phosphate + CO2. It participates in metabolic intermediate biosynthesis; 1-deoxy-D-xylulose 5-phosphate biosynthesis; 1-deoxy-D-xylulose 5-phosphate from D-glyceraldehyde 3-phosphate and pyruvate: step 1/1. Catalyzes the acyloin condensation reaction between C atoms 2 and 3 of pyruvate and glyceraldehyde 3-phosphate to yield 1-deoxy-D-xylulose-5-phosphate (DXP). This is 1-deoxy-D-xylulose-5-phosphate synthase from Campylobacter jejuni subsp. jejuni serotype O:6 (strain 81116 / NCTC 11828).